The sequence spans 153 residues: Transcriptional repressor NrdR (153 aa).

The disordered stretch occupies residues 1 to 20 (MKCPFCNSADTRVKNSRHSD). A zinc finger spans residues 3 to 34 (CPFCNSADTRVKNSRHSDDNMSVRRRRLCEVC). Positions 11–20 (TRVKNSRHSD) are enriched in basic and acidic residues. Residues 49–139 (IMVLKKDGRM…VYMDFSDADD (91 aa)) form the ATP-cone domain.

Belongs to the NrdR family. The cofactor is Zn(2+).

Negatively regulates transcription of bacterial ribonucleotide reductase nrd genes and operons by binding to NrdR-boxes. This Anaplasma phagocytophilum (strain HZ) protein is Transcriptional repressor NrdR.